Here is a 399-residue protein sequence, read N- to C-terminus: Elongation factor Tu (399 aa).

The region spanning 10–209 is the tr-type G domain; the sequence is KPHVNIGTIG…EVDAYIPTPK (200 aa). A G1 region spans residues 19 to 26; sequence GHVDHGKT. 19 to 26 contributes to the GTP binding site; that stretch reads GHVDHGKT. Thr-26 contributes to the Mg(2+) binding site. The segment at 60 to 64 is G2; that stretch reads GITIA. Residues 81–84 form a G3 region; it reads DCPG. Residues 81-85 and 136-139 contribute to the GTP site; these read DCPGH and NKQD. The tract at residues 136–139 is G4; that stretch reads NKQD. A G5 region spans residues 174–176; that stretch reads SAL.

Belongs to the TRAFAC class translation factor GTPase superfamily. Classic translation factor GTPase family. EF-Tu/EF-1A subfamily. As to quaternary structure, monomer.

The protein localises to the cytoplasm. It catalyses the reaction GTP + H2O = GDP + phosphate + H(+). GTP hydrolase that promotes the GTP-dependent binding of aminoacyl-tRNA to the A-site of ribosomes during protein biosynthesis. The polypeptide is Elongation factor Tu (Helicobacter pylori (strain P12)).